The sequence spans 646 residues: Esterase EstA (646 aa).

Positions 1-24 (MIRMALKPLVAACLLASLSTAPQA) are cleaved as a signal peptide. Residues 25-397 (APSPYSTLVV…DSAASGDGNG (373 aa)) lie on the Extracellular side of the membrane. S38 (nucleophile) is an active-site residue. Residues D310 and H313 contribute to the active site. One can recognise an Autotransporter domain in the interval 366-646 (QNVGQWRGFV…SVSLALSLDF (281 aa)). A beta stranded membrane pass occupies residues 398 to 408 (YNLTLGGSYRI). Residues 409 to 410 (DE) are Periplasmic-facing. Residues 411 to 421 (AWRAGVAAGFY) form a beta stranded membrane-spanning segment. The Extracellular segment spans residues 422-437 (RQKLEAGAKDSDYRMN). The chain crosses the membrane as a beta stranded span at residues 438–447 (SYMASAFVQY). The Periplasmic portion of the chain corresponds to 448 to 451 (QENR). Residues 452 to 461 (WWADAALTGG) form a beta stranded membrane-spanning segment. At 462–488 (YLDYDDLKRKFALGGGERSEKGDTNGH) the chain is on the extracellular side. The beta stranded transmembrane segment at 489–500 (LWAFSARLGYDI) threads the bilayer. Residues 501 to 507 (AQQADSP) lie on the Periplasmic side of the membrane. The beta stranded transmembrane segment at 508–518 (WHLSPFVSADY) threads the bilayer. Residues 519–547 (ARVEVDGYSEKGASATALDYDDQKRSSKR) are Extracellular-facing. The chain crosses the membrane as a beta stranded span at residues 548–558 (LGAGLQGKYAF). The Periplasmic segment spans residues 559–561 (GSD). Residues 562–571 (TQLFAEYAHE) form a beta stranded membrane-spanning segment. At 572–605 (REYEDDTQDLTMSLNSLPGNRFTLEGYTPQDHLN) the chain is on the extracellular side. A beta stranded transmembrane segment spans residues 606–615 (RVSLGFSQKL). At 616–618 (APE) the chain is on the periplasmic side. The beta stranded transmembrane segment at 619–628 (LSLRGGYNWR) threads the bilayer. Topologically, residues 629-636 (KGEDDTQQ) are extracellular. Residues 637–646 (SVSLALSLDF) form a beta stranded membrane-spanning segment.

It belongs to the 'GDSL' lipolytic enzyme family.

Its subcellular location is the cell outer membrane. It catalyses the reaction a carboxylic ester + H2O = an alcohol + a carboxylate + H(+). Functionally, esterase whose enzymatic activity is required for rhamnolipid production, all kinds of cell motility (swimming, swarming, and twitching), and biofilm formation; the exact role of EstA in these processes is unclear. In vitro, has pronounced esterase activities towards p-nitrophenyl esters of short acyl chain length (C4-C6) and Tween detergents. Also shows relatively high activity towards beta-naphthyl butyrate, whereas its activities towards triacylglycerols and acyls-CoA are negligible. The protein is Esterase EstA (estA) of Pseudomonas aeruginosa (strain ATCC 15692 / DSM 22644 / CIP 104116 / JCM 14847 / LMG 12228 / 1C / PRS 101 / PAO1).